Consider the following 313-residue polypeptide: ADP-L-glycero-D-manno-heptose-6-epimerase (313 aa).

NADP(+)-binding positions include 10–11 (MI), 31–32 (DN), lysine 38, lysine 53, 75–79 (EGACS), and asparagine 92. Tyrosine 139 serves as the catalytic Proton acceptor. Lysine 143 is a binding site for NADP(+). Asparagine 174 contacts substrate. Residues valine 175 and lysine 183 each contribute to the NADP(+) site. Lysine 183 serves as the catalytic Proton acceptor. Substrate contacts are provided by residues serine 185, histidine 192, 206–209 (FEGS), arginine 214, and tyrosine 277.

This sequence belongs to the NAD(P)-dependent epimerase/dehydratase family. HldD subfamily. Homopentamer. NADP(+) is required as a cofactor.

The catalysed reaction is ADP-D-glycero-beta-D-manno-heptose = ADP-L-glycero-beta-D-manno-heptose. Its pathway is nucleotide-sugar biosynthesis; ADP-L-glycero-beta-D-manno-heptose biosynthesis; ADP-L-glycero-beta-D-manno-heptose from D-glycero-beta-D-manno-heptose 7-phosphate: step 4/4. In terms of biological role, catalyzes the interconversion between ADP-D-glycero-beta-D-manno-heptose and ADP-L-glycero-beta-D-manno-heptose via an epimerization at carbon 6 of the heptose. The sequence is that of ADP-L-glycero-D-manno-heptose-6-epimerase from Aliivibrio fischeri (strain MJ11) (Vibrio fischeri).